Consider the following 263-residue polypeptide: MPEGPEIRRAADKLVEAVVGKTLTRVWFAFPELKPYETELVGQQVRQIETRGKALLTYFSHDRVLYSHNQLYGVWRVVNAGESPETKRDLRIRLETQDRAILLYSASDIEMLTLDTLTAHPFLQRIGPDVLDLSLTPEQVCERLLLPRFRRRQFSGLLLDQAFLAGLGNYLRVEILWQAQLAPQHTASQLNEEQLQTLSRALLEIPRLSYNTRGTVDENRHHGAIFSFKVFHREGESCERCGGTIERTMLSSRPFYWCPHCQS.

Proline 2 (schiff-base intermediate with DNA) is an active-site residue. Glutamate 3 serves as the catalytic Proton donor. Residue lysine 53 is the Proton donor; for beta-elimination activity of the active site. 3 residues coordinate DNA: glutamine 70, arginine 125, and asparagine 169. The FPG-type zinc-finger motif lies at 229 to 263 (KVFHREGESCERCGGTIERTMLSSRPFYWCPHCQS). The Proton donor; for delta-elimination activity role is filled by arginine 253.

Belongs to the FPG family. The cofactor is Zn(2+).

It carries out the reaction 2'-deoxyribonucleotide-(2'-deoxyribose 5'-phosphate)-2'-deoxyribonucleotide-DNA = a 3'-end 2'-deoxyribonucleotide-(2,3-dehydro-2,3-deoxyribose 5'-phosphate)-DNA + a 5'-end 5'-phospho-2'-deoxyribonucleoside-DNA + H(+). Functionally, involved in base excision repair of DNA damaged by oxidation or by mutagenic agents. Acts as a DNA glycosylase that recognizes and removes damaged bases. Has a preference for oxidized pyrimidines, such as thymine glycol, 5,6-dihydrouracil and 5,6-dihydrothymine. Has AP (apurinic/apyrimidinic) lyase activity and introduces nicks in the DNA strand. Cleaves the DNA backbone by beta-delta elimination to generate a single-strand break at the site of the removed base with both 3'- and 5'-phosphates. The chain is Endonuclease 8 from Pectobacterium atrosepticum (strain SCRI 1043 / ATCC BAA-672) (Erwinia carotovora subsp. atroseptica).